The chain runs to 465 residues: Cysteine--tRNA ligase (465 aa).

C30 is a binding site for Zn(2+). Residues 32–42 (MTVYDYCHVGH) carry the 'HIGH' region motif. Residues C214, H239, and E243 each coordinate Zn(2+). Residues 271–275 (KMSKS) carry the 'KMSKS' region motif. Position 274 (K274) interacts with ATP.

The protein belongs to the class-I aminoacyl-tRNA synthetase family. Monomer. The cofactor is Zn(2+).

Its subcellular location is the cytoplasm. The catalysed reaction is tRNA(Cys) + L-cysteine + ATP = L-cysteinyl-tRNA(Cys) + AMP + diphosphate. This chain is Cysteine--tRNA ligase, found in Ralstonia nicotianae (strain ATCC BAA-1114 / GMI1000) (Ralstonia solanacearum).